Here is a 432-residue protein sequence, read N- to C-terminus: Transcription factor E2F1 (432 aa).

Disordered stretches follow at residues 39 to 85 (DVGA…GRPP) and 98 to 126 (YLAG…KSRY). Residues 65–106 (ATPQAPRPAPSAPRPALGRPPVKRRLDLETDHQYLAGSSGPF) are cyclin A:CDK2 binding. The segment at 87–189 (KRRLDLETDH…KKSKNHIQWL (103 aa)) is interaction with BIRC2/c-IAP1. A DNA-binding region spans residues 108 to 192 (GRGRHPGKGV…KNHIQWLGSR (85 aa)). Lysine 115, lysine 118, and lysine 123 each carry N6-acetyllysine. The interval 151–172 (LNWAAEVLKVQKRRIYDITNVL) is leucine-zipper. A DEF box motif is present at residues 156–192 (EVLKVQKRRIYDITNVLEGIQLIAKKSKNHIQWLGSR). At lysine 183 the chain carries N6-methyllysine; by SETD7. Residues 190–377 (GSRTMVGIGQ…RLSPLVAADS (188 aa)) form a required for interaction with TRIM28 region. Positions 193 to 282 (TMVGIGQRLE…AVDSAETFQI (90 aa)) are dimerization. Residues 297–342 (PEESAEGISPGRTSYQETSGEDRNADSGTAGPPPSPPSTSPTLDPS) form a disordered region. Residues 363-432 (PMEEDRLSPL…DFGDLTPLDF (70 aa)) form a transactivation region. A phosphoserine mark is found at serine 370 and serine 398. The segment at 404–421 (VDYHFGLEEGEGIRDLFD) is RB1 binding. Threonine 428 is modified (phosphothreonine).

This sequence belongs to the E2F/DP family. Component of the DRTF1/E2F transcription factor complex. Forms heterodimers with DP family members. The E2F1 complex binds specifically hypophosphorylated RB1, the interaction represses E2F1-driven transcription. During the cell cycle, RB1 becomes phosphorylated in mid-to-late G1 phase, detaches from the DRTF1/E2F complex, rendering E2F transcriptionally active. Interacts with TRRAP, which probably mediates its interaction with histone acetyltransferase complexes, leading to transcription activation. Binds TOPBP1 and EAPP. Interacts with ARID3A. Interacts with TRIM28; the interaction inhibits E2F1 acetylation through recruiting HDAC1 and represses its transcriptional activity. Interaction with KAT2B; the interaction acetylates E2F1 enhancing its DNA-binding and transcriptional activity. Interacts with BIRC2/c-IAP1 (via BIR domains). The complex TFDP1:E2F1 interacts with CEBPA; the interaction prevents CEBPA binding to target genes promoters and represses its transcriptional activity. Interacts with RRP1B. Interacts with HCFC1. Interacts with KMT2E; the interaction is probably indirect and is mediated via HCFC1. Interacts with DCAF5 and L3MBTL3; the interaction requires methylation at Lys-183 and is necessary to target E2F1 for ubiquitination by the CRL4-DCAF5 E3 ubiquitin ligase complex. Phosphorylated by CDK2 and cyclin A-CDK2 in the S-phase. Phosphorylation by CHEK2 stabilizes E2F1 upon DNA damage and regulates its effect on transcription and apoptosis. Phosphorylation at Ser-398 by GSK3B promotes interaction with USP11, leading to its deubiquitination and stabilization. In terms of processing, ubiquitinated via 'Lys-63'-linked ubiquitin, leading to its degradation. Deubiquitinated by USP11 following phosphorylation by GSK3B, promoting its stability. Post-translationally, acetylation stimulates DNA-binding. Enhanced under stress conditions such as DNA damage and inhibited by retinoblastoma protein RB1. Regulated by KAP1/TRIM28 which recruits HDAC1 to E2F1 resulting in deacetylation. Methylation at Lys-183 by SETD7 promotes E2F1 ubiquitin-dependent proteasomal degradation.

The protein resides in the nucleus. With respect to regulation, BIRC2/c-IAP1 stimulates its transcriptional activity. Its function is as follows. Transcription activator that binds DNA cooperatively with DP proteins through the E2 recognition site, 5'-TTTC[CG]CGC-3' found in the promoter region of a number of genes whose products are involved in cell cycle regulation or in DNA replication. The DRTF1/E2F complex functions in the control of cell-cycle progression from G1 to S phase. E2F1 binds preferentially RB1 in a cell-cycle dependent manner. It can mediate both cell proliferation and TP53/p53-dependent apoptosis. Blocks adipocyte differentiation by binding to specific promoters repressing CEBPA binding to its target gene promoters. Directly activates transcription of PEG10. Positively regulates transcription of RRP1B. The protein is Transcription factor E2F1 of Rattus norvegicus (Rat).